Consider the following 292-residue polypeptide: Probable xyloglucan endotransglucosylase/hydrolase protein 6 (292 aa).

The signal sequence occupies residues 1–30; the sequence is MAKIYSPSFPGTLCLCIFTLLTLMFIRVSA. Residues 31 to 224 form the GH16 domain; sequence RPATFVEDFK…WSKAPFYAYY (194 aa). The active-site Nucleophile is the Glu-110. Residue Glu-114 is the Proton donor of the active site. Residue Glu-114 coordinates xyloglucan. An N-linked (GlcNAc...) asparagine glycan is attached at Asn-118. Xyloglucan-binding positions include 127–129, 137–139, 203–204, and Gly-208; these read QTN, DRE, and DW. 2 cysteine pairs are disulfide-bonded: Cys-232–Cys-240 and Cys-277–Cys-290. Arg-282 provides a ligand contact to xyloglucan.

This sequence belongs to the glycosyl hydrolase 16 family. XTH group 1 subfamily. Post-translationally, contains at least one intrachain disulfide bond essential for its enzymatic activity.

The protein localises to the secreted. It localises to the cell wall. It is found in the extracellular space. The protein resides in the apoplast. It carries out the reaction breaks a beta-(1-&gt;4) bond in the backbone of a xyloglucan and transfers the xyloglucanyl segment on to O-4 of the non-reducing terminal glucose residue of an acceptor, which can be a xyloglucan or an oligosaccharide of xyloglucan.. Catalyzes xyloglucan endohydrolysis (XEH) and/or endotransglycosylation (XET). Cleaves and religates xyloglucan polymers, an essential constituent of the primary cell wall, and thereby participates in cell wall construction of growing tissues. The protein is Probable xyloglucan endotransglucosylase/hydrolase protein 6 (XTH6) of Arabidopsis thaliana (Mouse-ear cress).